Here is a 213-residue protein sequence, read N- to C-terminus: 3-hexulose-6-phosphate synthase 2 (213 aa).

It belongs to the HPS/KGPDC family. HPS subfamily.

It carries out the reaction D-ribulose 5-phosphate + formaldehyde = D-arabino-hex-3-ulose 6-phosphate. It participates in one-carbon metabolism; formaldehyde assimilation via RuMP pathway; D-fructose 6-phosphate from D-ribulose 5-phosphate and formaldehyde: step 1/2. In terms of biological role, catalyzes the condensation of ribulose 5-phosphate with formaldehyde to form 3-hexulose 6-phosphate. This chain is 3-hexulose-6-phosphate synthase 2, found in Staphylococcus saprophyticus subsp. saprophyticus (strain ATCC 15305 / DSM 20229 / NCIMB 8711 / NCTC 7292 / S-41).